Here is a 188-residue protein sequence, read N- to C-terminus: Elongation factor P (188 aa).

Belongs to the elongation factor P family.

It localises to the cytoplasm. Its pathway is protein biosynthesis; polypeptide chain elongation. Its function is as follows. Involved in peptide bond synthesis. Stimulates efficient translation and peptide-bond synthesis on native or reconstituted 70S ribosomes in vitro. Probably functions indirectly by altering the affinity of the ribosome for aminoacyl-tRNA, thus increasing their reactivity as acceptors for peptidyl transferase. This chain is Elongation factor P, found in Chloroherpeton thalassium (strain ATCC 35110 / GB-78).